The chain runs to 531 residues: MERLAGRIILLSGVSRAFVGFLAGLLAVLAQPPFGIFAAAFVSFPVLVWLIDGVAPDPSDGAFRRLRQPAAIGWSFGFGYFLGGLWWLGNALLVEADAFAWAIPLAVVGLPAVLGVFYALAVVIARCLWSDGWGRIAALALGFGIAEWLRGFVFTGFPWNAIGYAAMPMPLMMQSASVVNLSTINMLAVFVFAAPALIWTGKGARTGLAIAVALFTAHIAFGFYRLAQPAPPSAAPQMAVRVVQPVIDQAKKLDDRERASIFEDHLSLTAAPVQGGGKRPDIVVWPETSIPFILTDNPDALARIAEVLKDGQILVAGAVRAEDAGAGLPSRYYNSVYVIDDRGQIIGAADKVHLVPFGEYLPYEDLLTSWGLSSIAASMPGGFSAARMRPVLTLPGGRRLYPMICYEAIFADEVDANARLADVLLNVTNDAWFGDTPGPRQHFHQAQLRAVETGIPMIRAANTGISAVVDARGVLVLVLGYNYRGVLDTILPGKLPTLTDVPTRSRIFWLSMAILSIVASFSRFGFNIRKN.

A run of 7 helical transmembrane segments spans residues 8–28 (IILLSGVSRAFVGFLAGLLAV), 34–54 (FGIFAAAFVSFPVLVWLIDGV), 69–89 (PAAIGWSFGFGYFLGGLWWLG), 105–125 (LAVVGLPAVLGVFYALAVVIA), 136–156 (IAALALGFGIAEWLRGFVFTG), 178–198 (VVNLSTINMLAVFVFAAPALI), and 207–227 (GLAIAVALFTAHIAFGFYRLA). The region spanning 243–493 (VQPVIDQAKK…RGVLDTILPG (251 aa)) is the CN hydrolase domain. The active-site Proton acceptor is the Glu-287. Lys-351 is a catalytic residue. Cys-405 (nucleophile) is an active-site residue. The chain crosses the membrane as a helical span at residues 507 to 527 (IFWLSMAILSIVASFSRFGFN).

Belongs to the CN hydrolase family. Apolipoprotein N-acyltransferase subfamily.

The protein localises to the cell inner membrane. The catalysed reaction is N-terminal S-1,2-diacyl-sn-glyceryl-L-cysteinyl-[lipoprotein] + a glycerophospholipid = N-acyl-S-1,2-diacyl-sn-glyceryl-L-cysteinyl-[lipoprotein] + a 2-acyl-sn-glycero-3-phospholipid + H(+). The protein operates within protein modification; lipoprotein biosynthesis (N-acyl transfer). Functionally, catalyzes the phospholipid dependent N-acylation of the N-terminal cysteine of apolipoprotein, the last step in lipoprotein maturation. In Sinorhizobium medicae (strain WSM419) (Ensifer medicae), this protein is Apolipoprotein N-acyltransferase.